Consider the following 193-residue polypeptide: ATP-dependent Clp protease proteolytic subunit (193 aa).

Serine 98 acts as the Nucleophile in catalysis. Histidine 123 is an active-site residue.

The protein belongs to the peptidase S14 family. In terms of assembly, fourteen ClpP subunits assemble into 2 heptameric rings which stack back to back to give a disk-like structure with a central cavity, resembling the structure of eukaryotic proteasomes.

It localises to the cytoplasm. The catalysed reaction is Hydrolysis of proteins to small peptides in the presence of ATP and magnesium. alpha-casein is the usual test substrate. In the absence of ATP, only oligopeptides shorter than five residues are hydrolyzed (such as succinyl-Leu-Tyr-|-NHMec, and Leu-Tyr-Leu-|-Tyr-Trp, in which cleavage of the -Tyr-|-Leu- and -Tyr-|-Trp bonds also occurs).. Cleaves peptides in various proteins in a process that requires ATP hydrolysis. Has a chymotrypsin-like activity. Plays a major role in the degradation of misfolded proteins. The chain is ATP-dependent Clp protease proteolytic subunit from Mannheimia succiniciproducens (strain KCTC 0769BP / MBEL55E).